Reading from the N-terminus, the 315-residue chain is uncharacterized protein (315 aa).

The Cytoplasmic portion of the chain corresponds to 1-38 (MDVLLSLPQPELFKTTVIPFLANRNIIKSEAILSNLHS). The chain crosses the membrane as a helical span at residues 39–59 (IFYVAIFYHIWFLFGKWILFP). The Lumenal portion of the chain corresponds to 60 to 101 (HLVKWKLDYDQKHNVKKDEKTTSERQAQHYKKKYTSLINQSS). Positions 95-302 (SLINQSSVHL…MVSVAAKVLK (208 aa)) constitute a TLC domain. A helical transmembrane segment spans residues 102-122 (VHLISLLQSIVVLYYSLKFLL). The Cytoplasmic segment spans residues 123 to 144 (DPKASAEPYQTSHSRVFTENRD). A helical transmembrane segment spans residues 145-165 (TQVICIFAIGYFVWDIYISTM). Residues 166–170 (YSTFP) lie on the Lumenal side of the membrane. Residues 171–190 (FVVHGIISTVVFCIGLKPYI) form a helical membrane-spanning segment. Over 191–225 (QYYAPVFLMFELSNPSLNFRWFGIKFLPQKSKFCS) the chain is Cytoplasmic. A helical membrane pass occupies residues 226-246 (LLLLLNNLTLMVVFFAARIAW). Residues 247-264 (GWFQIGKLCYDFYQVRNE) lie on the Lumenal side of the membrane. The chain crosses the membrane as a helical span at residues 265-285 (PGFLVFDTIVILAGNFVLDIL). Topologically, residues 286–315 (NVIWFSTMVSVAAKVLKKGESVDKVTKNEQ) are cytoplasmic.

Its subcellular location is the endoplasmic reticulum membrane. This is an uncharacterized protein from Saccharomyces cerevisiae (strain ATCC 204508 / S288c) (Baker's yeast).